Reading from the N-terminus, the 319-residue chain is Cell surface A33 antigen (319 aa).

An N-terminal signal peptide occupies residues 1 to 21; the sequence is MVGKMWPVLWTLCAVRVTVDA. One can recognise an Ig-like V-type domain in the interval 22–134; it reads ISVETPQDVL…LEGNTKSRVR (113 aa). Residues 22-235 lie on the Extracellular side of the membrane; that stretch reads ISVETPQDVL…VAVRSPSMNV (214 aa). Disulfide bonds link C43–C117, C146–C222, and C162–C211. N112, N200, and N223 each carry an N-linked (GlcNAc...) asparagine glycan. The region spanning 140–227 is the Ig-like C2-type domain; that stretch reads PPSKPECGIE…GTQFCNITVA (88 aa). A helical membrane pass occupies residues 236–256; it reads ALYVGIAVGVVAALIIIGIII. The Cytoplasmic segment spans residues 257-319; it reads YCCCCRGKDD…GRESPDHLDQ (63 aa). 2 stretches are compositionally biased toward basic and acidic residues: residues 267–295 and 303–319; these read NTED…SRER and QEEQ…HLDQ. Positions 267-319 are disordered; that stretch reads NTEDKEDARPNREAYEEPPEQLRELSREREEEDDYRQEEQRSTGRESPDHLDQ.

N-glycosylated, contains approximately 8 kDa of N-linked carbohydrate. In terms of processing, palmitoylated. Expressed in normal gastrointestinal epithelium and in 95% of colon cancers.

The protein localises to the membrane. May play a role in cell-cell recognition and signaling. In Homo sapiens (Human), this protein is Cell surface A33 antigen (GPA33).